A 373-amino-acid polypeptide reads, in one-letter code: Dual-specificity RNA methyltransferase RlmN (373 aa).

Glu94 (proton acceptor) is an active-site residue. A Radical SAM core domain is found at Glu100 to Asp339. Cys107 and Cys344 are oxidised to a cystine. [4Fe-4S] cluster contacts are provided by Cys114, Cys118, and Cys121. S-adenosyl-L-methionine contacts are provided by residues Gly168–Glu169, Ser200, Ser222–His224, and Asn301. The S-methylcysteine intermediate role is filled by Cys344.

The protein belongs to the radical SAM superfamily. RlmN family. [4Fe-4S] cluster serves as cofactor.

The protein localises to the cytoplasm. The enzyme catalyses adenosine(2503) in 23S rRNA + 2 reduced [2Fe-2S]-[ferredoxin] + 2 S-adenosyl-L-methionine = 2-methyladenosine(2503) in 23S rRNA + 5'-deoxyadenosine + L-methionine + 2 oxidized [2Fe-2S]-[ferredoxin] + S-adenosyl-L-homocysteine. It carries out the reaction adenosine(37) in tRNA + 2 reduced [2Fe-2S]-[ferredoxin] + 2 S-adenosyl-L-methionine = 2-methyladenosine(37) in tRNA + 5'-deoxyadenosine + L-methionine + 2 oxidized [2Fe-2S]-[ferredoxin] + S-adenosyl-L-homocysteine. In terms of biological role, specifically methylates position 2 of adenine 2503 in 23S rRNA and position 2 of adenine 37 in tRNAs. m2A2503 modification seems to play a crucial role in the proofreading step occurring at the peptidyl transferase center and thus would serve to optimize ribosomal fidelity. The polypeptide is Dual-specificity RNA methyltransferase RlmN (Shewanella sediminis (strain HAW-EB3)).